Consider the following 690-residue polypeptide: Adhesion G protein-coupled receptor L4 (690 aa).

The signal sequence occupies residues 1 to 19 (MKRLPLLVVFSTLLNCSYT). Residues 20–57 (QNCTKTPCLPNAKCEIRNGIEACYCNMGFSGNGVTICE) form the EGF-like 1 domain. Over 20-432 (QNCTKTPCLP…DYNILTRITQ (413 aa)) the chain is Extracellular. An N-linked (GlcNAc...) asparagine glycan is attached at asparagine 21. Disulfide bonds link cysteine 22–cysteine 33, cysteine 27–cysteine 42, cysteine 44–cysteine 56, cysteine 62–cysteine 75, cysteine 69–cysteine 84, and cysteine 86–cysteine 107. Residues 58 to 108 (DDNECGNLTQSCGENANCTNTEGSYYCMCVPGFRSSSNQDRFITNDGTVCI) enclose the EGF-like 2; calcium-binding domain. Residues asparagine 64 and asparagine 74 are each glycosylated (N-linked (GlcNAc...) asparagine). Residues asparagine 127, asparagine 177, asparagine 188, asparagine 249, asparagine 381, and asparagine 395 are each glycosylated (N-linked (GlcNAc...) asparagine). In terms of domain architecture, GAIN-B spans 244 to 419 (TEFDTNSTDI…AILMSSGPSI (176 aa)). Cystine bridges form between cysteine 370–cysteine 401 and cysteine 389–cysteine 403. The segment at 370 to 419 (CAFWNYSPDTMNGSWSSEGCELTYSNETHTSCRCNHLTHFAILMSSGPSI) is GPS. The chain crosses the membrane as a helical span at residues 433-453 (LGIIISLICLAICIFTFWFFS). Topologically, residues 454–460 (EIQSTRT) are cytoplasmic. A helical membrane pass occupies residues 461–481 (TIHKNLCCSLFLAELVFLVGI). Over 482–499 (NTNTNKLFCSIIAGLLHY) the chain is Extracellular. A helical transmembrane segment spans residues 500-520 (FFLAAFAWMCIEGIHLYLIVV). The Cytoplasmic segment spans residues 521-532 (GVIYNKGFLHKN). The chain crosses the membrane as a helical span at residues 533–553 (FYIFGYLSPAVVVGFSAALGY). Topologically, residues 554–573 (RYYGTTKVCWLSTENNFIWS) are extracellular. The helical transmembrane segment at 574–594 (FIGPACLIILVNLLAFGVIIY) threads the bilayer. Topologically, residues 595–618 (KVFRHTAGLKPEVSCFENIRSCAR) are cytoplasmic. A helical membrane pass occupies residues 619 to 639 (GALALLFLLGTTWIFGVLHVV). Residues 640–646 (HASVVTA) are Extracellular-facing. The chain crosses the membrane as a helical span at residues 647–667 (YLFTVSNAFQGMFIFLFLCVL). Topologically, residues 668 to 690 (SRKIQEEYYRLFKNVPCCFGCLR) are cytoplasmic.

Belongs to the G-protein coupled receptor 2 family. Adhesion G-protein coupled receptor (ADGR) subfamily. Heterodimer of 2 chains generated by proteolytic processing; the large extracellular N-terminal fragment and the membrane-bound C-terminal fragment predominantly remain associated and non-covalently linked. Post-translationally, glycosylated. In terms of processing, proteolytically cleaved into 2 subunits, an extracellular alpha subunit and a seven-transmembrane subunit. In terms of tissue distribution, detected in the majority of epithelial cells in tumor and normal tissues. Expressed also in human umbilical vein endothelial cells.

Its subcellular location is the cell membrane. Its function is as follows. Endothelial orphan receptor that acts as a key regulator of angiogenesis. The protein is Adhesion G protein-coupled receptor L4 of Homo sapiens (Human).